Consider the following 30-residue polypeptide: Cyclotide mden-I (30 aa).

The cyclopeptide (Gly-Asn) cross-link spans 1–30; the sequence is GIPCGESCVYIPCITTAIGCSCKNKVCYRN. Disulfide bonds link Cys4–Cys20, Cys8–Cys22, and Cys13–Cys27.

This sequence belongs to the cyclotide family. Bracelet subfamily. Post-translationally, this is a cyclic peptide.

In terms of biological role, probably participates in a plant defense mechanism. The sequence is that of Cyclotide mden-I from Melicytus dentatus (Tree violet).